We begin with the raw amino-acid sequence, 265 residues long: MPGFRFLLAATAAFLATSPALPLSADSLNAGNIRLVDPEETVPVIKIPDGIYLRTPNDPDDIIWARVPEFRVEMVMAPPVHPSVGLRYRDEYPEQDLVVQLARTSERFYVRLRWVDPTRDMSTLRDRFRDGAAIEFSESDDSVSYMMGTDAESPVNIWYWHPDGDRVESLAAGSPGSLTRLDRQPVTGASEYRTGHGPDDSQWIVVMSRPLASEGDHQVSFERDTIPVAFALWQGADAQRDGLKLVSLNWIFARMTPDAAPAPGN.

An N-terminal signal peptide occupies residues Met1–Ala25. 2 residues coordinate heme b: His81 and Met147.

Heterotrimer of alpha, beta and gamma subunits. Requires heme b as cofactor.

The protein localises to the periplasm. Functionally, may transfer electrons to the iron-sulfur centers of DdhB. This chain is Dimethylsulfide dehydrogenase subunit gamma (ddhC), found in Rhodovulum sulfidophilum (Rhodobacter sulfidophilus).